The chain runs to 282 residues: Probable protein phosphatase 2C 45 (282 aa).

Positions 27–272 (SYGYASSPGK…DNITCVVVRF (246 aa)) constitute a PPM-type phosphatase domain. Residues Asp63, Gly64, Asp224, and Asp263 each contribute to the Mn(2+) site.

It belongs to the PP2C family. It depends on Mg(2+) as a cofactor. Mn(2+) serves as cofactor.

The catalysed reaction is O-phospho-L-seryl-[protein] + H2O = L-seryl-[protein] + phosphate. The enzyme catalyses O-phospho-L-threonyl-[protein] + H2O = L-threonyl-[protein] + phosphate. This Oryza sativa subsp. japonica (Rice) protein is Probable protein phosphatase 2C 45.